The chain runs to 647 residues: DNA mismatch repair protein MutL (647 aa).

It belongs to the DNA mismatch repair MutL/HexB family.

Its function is as follows. This protein is involved in the repair of mismatches in DNA. It is required for dam-dependent methyl-directed DNA mismatch repair. May act as a 'molecular matchmaker', a protein that promotes the formation of a stable complex between two or more DNA-binding proteins in an ATP-dependent manner without itself being part of a final effector complex. The protein is DNA mismatch repair protein MutL of Bacillus cereus (strain 03BB102).